Reading from the N-terminus, the 377-residue chain is Prostaglandin E synthase 2 (377 aa).

Over 1–57 (MDPAARVVRALWPGGCALAWRLGGRPQPLLPTQSRAGFAGAAGGPSPVAAARKGSPR) the chain is Lumenal. Residues 58–74 (LLGAAALALGGALGLYH) form a helical membrane-spanning segment. The Cytoplasmic portion of the chain corresponds to 75–377 (TARWHLRAQD…RAITEASPAH (303 aa)). A Glutaredoxin domain is found at 90-193 (SAAQLSLSSR…EIITYYPAMK (104 aa)). Serine 95 bears the Phosphoserine mark. Residues valine 148 and 164 to 165 (DS) contribute to the glutathione site. Positions 263–377 (YIVREGKFGA…RAITEASPAH (115 aa)) constitute a GST C-terminal domain.

Belongs to the GST superfamily. Homodimer. May interact with CEBPB. Interacts with EXOSC10. Post-translationally, synthesized as a Golgi membrane-associated protein, and the proteolytic removal of the N-terminal hydrophobic domain leads to the formation of a mature cytosolic enzyme. Widely expressed. Expressed in the heart, including apex, inter-ventricular septum, both atria and ventricles, but not in the aorta. Also expressed in fetal heart. Detected in various regions of the brain: cerebellum; occipital, frontal and parietal lobes. Also expressed in the lymph nodes, skeletal muscle, kidney and trachea, but not in the thymus or lung. Overexpressed in colorectal cancer.

It localises to the golgi apparatus membrane. It is found in the cytoplasm. Its subcellular location is the perinuclear region. It catalyses the reaction prostaglandin H2 = prostaglandin E2. The catalysed reaction is prostaglandin H2 = (12S)-hydroxy-(5Z,8E,10E)-heptadecatrienoate + malonaldehyde. Its pathway is lipid metabolism; prostaglandin biosynthesis. Isomerase activity is increased by sulfhydril compounds. Dithiothreitol (DTT) is most effective, followed by dihydrolipoic acid, glutathione (GSH) and 2-mercaptoethanol. Functionally, isomerase that catalyzes the conversion of PGH2 into the more stable prostaglandin E2 (PGE2) (in vitro). The biological function and the GSH-dependent property of PTGES2 is still under debate. In vivo, PTGES2 could form a complex with GSH and heme and would not participate in PGE2 synthesis but would catalyze the degradation of prostaglandin E2 H2 (PGH2) to 12(S)-hydroxy-5(Z),8(E),10(E)-heptadecatrienoic acid (HHT) and malondialdehyde (MDA). The chain is Prostaglandin E synthase 2 (PTGES2) from Homo sapiens (Human).